The chain runs to 280 residues: Nitrogenase iron protein (280 aa).

Residue glycine 9 to serine 16 participates in ATP binding. A [4Fe-4S] cluster-binding site is contributed by cysteine 97. At arginine 100 the chain carries ADP-ribosylarginine; by dinitrogenase reductase ADP-ribosyltransferase. Cysteine 132 contacts [4Fe-4S] cluster.

Belongs to the NifH/BchL/ChlL family. Homodimer. The cofactor is [4Fe-4S] cluster. Post-translationally, the reversible ADP-ribosylation of Arg-100 inactivates the nitrogenase reductase and regulates nitrogenase activity.

The enzyme catalyses N2 + 8 reduced [2Fe-2S]-[ferredoxin] + 16 ATP + 16 H2O = H2 + 8 oxidized [2Fe-2S]-[ferredoxin] + 2 NH4(+) + 16 ADP + 16 phosphate + 6 H(+). The key enzymatic reactions in nitrogen fixation are catalyzed by the nitrogenase complex, which has 2 components: the iron protein and the molybdenum-iron protein. The chain is Nitrogenase iron protein from Desulforudis audaxviator (strain MP104C).